The primary structure comprises 501 residues: Probable cytochrome P450 6a20 (501 aa).

Cys-445 is a binding site for heme.

This sequence belongs to the cytochrome P450 family. Heme is required as a cofactor.

The protein resides in the endoplasmic reticulum membrane. It localises to the microsome membrane. In terms of biological role, may be involved in the metabolism of insect hormones and in the breakdown of synthetic insecticides. This Drosophila melanogaster (Fruit fly) protein is Probable cytochrome P450 6a20 (Cyp6a20).